We begin with the raw amino-acid sequence, 669 residues long: MGSNSSRIGDLPKNEYLKKLSGTESISENDPFWNQLLSFSFPAPTSSSELKLLEEATISVCRSLVENNPRTGNLGALIKVFLSRTKELKLSAECQNHIFIWQTHNALFIICCLLKVFICQMSEEELQLHFTYEEKSPGNYSSDSEDLLEELLCCLMQLITDIPLLDITYEISVEAISTMVVFLSCQLFHKEVLRQSISHKYLMRGPCLPYTSKLVKTLLYNFIRQEKPPPPGAHVFPQQSDGGGLLYGLASGVATGLWTVFTLGGVGSKAAASPELSSPLANQSLLLLLVLANLTDASDAPNPYRQAIMSFKNTQDSSPFPSSIPHAFQINFNSLYTALCEQQTSDQATLLLYTLLHQNSNIRTYMLARTDMENLVLPILEILYHVEERNSHHVYMALIILLILTEDDGFNRSIHEVILKNITWYSERVLTEISLGSLLILVVIRTIQYNMTRTRDKYLHTNCLAALANMSAQFRSLHQYAAQRIISLFSLLSKKHNKVLEQATQSLRGSLSSNDVPLPDYAQDLNVIEEVIRMMLEIINSCLTNSLHHNPNLVYALLYKRDLFEQFRTHPSFQDIMQNIDLVISFFSSRLLQAGAELSVERVLEIIKQGVVALPKDRLKKFPELKFKYVEEEQPEEFFIPYVWSLVYNSAVGLYWNPQDIQLFTMDSD.

Gly-2 carries N-myristoyl glycine lipidation.

This sequence belongs to the dymeclin family. Interacts with GOLM1 and PPIB. Post-translationally, myristoylated in vitro; myristoylation is not essential for protein targeting to Golgi compartment. In terms of tissue distribution, expressed in most embryo-fetal and adult tissues. Abundant in primary chondrocytes, osteoblasts, cerebellum, kidney, lung, stomach, heart, pancreas and fetal brain. Very low or no expression in the spleen, thymus, esophagus, bladder and thyroid gland.

Its subcellular location is the cytoplasm. It is found in the golgi apparatus. It localises to the membrane. Functionally, necessary for correct organization of Golgi apparatus. Involved in bone development. In Homo sapiens (Human), this protein is Dymeclin (DYM).